Reading from the N-terminus, the 74-residue chain is Cecropin-P3 (74 aa).

The first 13 residues, 1–13, serve as a signal peptide directing secretion; that stretch reads MFLIYLLVQTAES. A propeptide spans 45–74 (removed in mature form); that stretch reads RRRSVGEEDAIPSHIEVNKFFLRKPAKEHI.

Belongs to the cecropin family. As to expression, expressed in the body wall, intestine, uterus and ovary.

The protein localises to the secreted. In terms of biological role, has antibacterial activity against several Gram-positive and Gram-negative bacteria. Is weakly active against yeasts. Acts by a nonpore mechanism. The polypeptide is Cecropin-P3 (ASCEC-3) (Ascaris suum (Pig roundworm)).